Here is a 410-residue protein sequence, read N- to C-terminus: Cytochrome P450(MEG) (410 aa).

Cys355 lines the heme pocket.

Belongs to the cytochrome P450 family. The cofactor is heme.

Its subcellular location is the cytoplasm. The catalysed reaction is reduced 2[4Fe-4S]-[ferredoxin] + progesterone + O2 + 2 H(+) = 15beta-hydroxyprogesterone + oxidized 2[4Fe-4S]-[ferredoxin] + H2O. Its function is as follows. Has the capacity to hydroxylate certain steroids in the 15-beta position. Also hydroxylates progesterone in the 11-alpha and 9-beta position. This chain is Cytochrome P450(MEG) (cyp106A2), found in Priestia megaterium (Bacillus megaterium).